A 279-amino-acid chain; its full sequence is Large ribosomal subunit protein uL2 (279 aa).

Residues 223–279 form a disordered region; that stretch reads MAMNPVDHPMGGGEGKSKSGGGRKHPKSPWGQLAKGLKTRNKKKASSKLIVRGRKSK. The span at 232–242 shows a compositional bias: gly residues; the sequence is MGGGEGKSKSG. Residues 259-279 are compositionally biased toward basic residues; sequence LKTRNKKKASSKLIVRGRKSK.

The protein belongs to the universal ribosomal protein uL2 family. In terms of assembly, part of the 50S ribosomal subunit. Forms a bridge to the 30S subunit in the 70S ribosome.

In terms of biological role, one of the primary rRNA binding proteins. Required for association of the 30S and 50S subunits to form the 70S ribosome, for tRNA binding and peptide bond formation. It has been suggested to have peptidyltransferase activity; this is somewhat controversial. Makes several contacts with the 16S rRNA in the 70S ribosome. This chain is Large ribosomal subunit protein uL2, found in Prosthecochloris aestuarii (strain DSM 271 / SK 413).